An 898-amino-acid chain; its full sequence is Putative aconitate hydratase, cytoplasmic (898 aa).

Substrate contacts are provided by residues Gln90 and 209 to 211 (DSH). Positions 441, 507, and 510 each coordinate [4Fe-4S] cluster. Residues Arg540, Arg545, Arg703, and 784 to 785 (SR) contribute to the substrate site.

The protein belongs to the aconitase/IPM isomerase family. The cofactor is [4Fe-4S] cluster.

It is found in the cytoplasm. The enzyme catalyses citrate = D-threo-isocitrate. It participates in carbohydrate metabolism; glyoxylate and dicarboxylate metabolism. In terms of biological role, catalyzes the isomerization of citrate to isocitrate via cis-aconitate. The polypeptide is Putative aconitate hydratase, cytoplasmic (Oryza sativa subsp. japonica (Rice)).